We begin with the raw amino-acid sequence, 384 residues long: UDP-4-amino-4-deoxy-L-arabinose--oxoglutarate aminotransferase (384 aa).

Residue lysine 182 is modified to N6-(pyridoxal phosphate)lysine.

It belongs to the DegT/DnrJ/EryC1 family. ArnB subfamily. Homodimer. Requires pyridoxal 5'-phosphate as cofactor.

It carries out the reaction UDP-4-amino-4-deoxy-beta-L-arabinose + 2-oxoglutarate = UDP-beta-L-threo-pentopyranos-4-ulose + L-glutamate. The protein operates within nucleotide-sugar biosynthesis; UDP-4-deoxy-4-formamido-beta-L-arabinose biosynthesis; UDP-4-deoxy-4-formamido-beta-L-arabinose from UDP-alpha-D-glucuronate: step 2/3. It participates in bacterial outer membrane biogenesis; lipopolysaccharide biosynthesis. In terms of biological role, catalyzes the conversion of UDP-4-keto-arabinose (UDP-Ara4O) to UDP-4-amino-4-deoxy-L-arabinose (UDP-L-Ara4N). The modified arabinose is attached to lipid A and is required for resistance to polymyxin and cationic antimicrobial peptides. The protein is UDP-4-amino-4-deoxy-L-arabinose--oxoglutarate aminotransferase of Yersinia pseudotuberculosis serotype O:1b (strain IP 31758).